Consider the following 196-residue polypeptide: Glycerol-3-phosphate acyltransferase (196 aa).

A run of 5 helical transmembrane segments spans residues 1-21, 55-75, 81-101, 118-138, and 140-160; these read MIIFTATLIIILAYFLGSISG, IAIFVLLFDSLKGAVPIWLGT, PIYLYIIAISACIGHIYPIYF, AISINFFIIIIITWILTVYLF, and YASLGSIVTFIVITFYVWYIQ.

The protein belongs to the PlsY family. Probably interacts with PlsX.

Its subcellular location is the cell inner membrane. It catalyses the reaction an acyl phosphate + sn-glycerol 3-phosphate = a 1-acyl-sn-glycero-3-phosphate + phosphate. Its pathway is lipid metabolism; phospholipid metabolism. Its function is as follows. Catalyzes the transfer of an acyl group from acyl-phosphate (acyl-PO(4)) to glycerol-3-phosphate (G3P) to form lysophosphatidic acid (LPA). This enzyme utilizes acyl-phosphate as fatty acyl donor, but not acyl-CoA or acyl-ACP. This is Glycerol-3-phosphate acyltransferase from Blochmanniella floridana.